The following is a 351-amino-acid chain: Photosystem II D2 protein (351 aa).

The chain crosses the membrane as a helical span at residues 39–59; that stretch reads CAYLAVGGWLTGTTFVTSWYT. His-116 contacts chlorophyll a. A helical membrane pass occupies residues 123 to 139; the sequence is GFCLRQFEIARLVGLRP. Pheophytin a contacts are provided by Gln-128 and Asn-141. A helical transmembrane segment spans residues 151–164; the sequence is VFVSVFLMYPLGQA. His-196 provides a ligand contact to chlorophyll a. A helical membrane pass occupies residues 206–226; it reads GALLCAIHGATVQNTLFEDGD. A plastoquinone-binding residues include His-213 and Phe-260. Position 213 (His-213) interacts with Fe cation. His-267 contacts Fe cation. A helical membrane pass occupies residues 277-293; that stretch reads GLWTSAFGIVGLALNLR.

It belongs to the reaction center PufL/M/PsbA/D family. PSII is composed of 1 copy each of membrane proteins PsbA, PsbB, PsbC, PsbD, PsbE, PsbF, PsbH, PsbI, PsbJ, PsbK, PsbL, PsbM, PsbT, PsbX, PsbY, PsbZ, Psb30/Ycf12, at least 3 peripheral proteins of the oxygen-evolving complex and a large number of cofactors. It forms dimeric complexes. The cofactor is The D1/D2 heterodimer binds P680, chlorophylls that are the primary electron donor of PSII, and subsequent electron acceptors. It shares a non-heme iron and each subunit binds pheophytin, quinone, additional chlorophylls, carotenoids and lipids. There is also a Cl(-1) ion associated with D1 and D2, which is required for oxygen evolution. The PSII complex binds additional chlorophylls, carotenoids and specific lipids..

It is found in the plastid. The protein localises to the chloroplast thylakoid membrane. It catalyses the reaction 2 a plastoquinone + 4 hnu + 2 H2O = 2 a plastoquinol + O2. Functionally, photosystem II (PSII) is a light-driven water:plastoquinone oxidoreductase that uses light energy to abstract electrons from H(2)O, generating O(2) and a proton gradient subsequently used for ATP formation. It consists of a core antenna complex that captures photons, and an electron transfer chain that converts photonic excitation into a charge separation. The D1/D2 (PsbA/PsbD) reaction center heterodimer binds P680, the primary electron donor of PSII as well as several subsequent electron acceptors. D2 is needed for assembly of a stable PSII complex. This Pyropia yezoensis (Susabi-nori) protein is Photosystem II D2 protein.